A 381-amino-acid chain; its full sequence is Opsin Rh2 (381 aa).

The Extracellular portion of the chain corresponds to 1 to 56 (MERSHLPETPFDLAHSGPRFQAQSSGNGSVLDNVLPDMAHLVNPYWSRFAPMDPMM). Asparagine 27 carries an N-linked (GlcNAc...) asparagine glycan. Residues 57 to 81 (SKILGLFTLAIMIISCCGNGVVVYI) traverse the membrane as a helical segment. Over 82-93 (FGGTKSLRTPAN) the chain is Cytoplasmic. A helical transmembrane segment spans residues 94-119 (LLVLNLAFSDFCMMASQSPVMIINFY). Over 120-133 (YETWVLGPLWCDIY) the chain is Extracellular. Cysteine 130 and cysteine 207 form a disulfide bridge. Residues 134–153 (AGCGSLFGCVSIWSMCMIAF) traverse the membrane as a helical segment. Residues 154–172 (DRYNVIVKGINGTPMTIKT) lie on the Cytoplasmic side of the membrane. Residues 173–196 (SIMKILFIWMMAVFWTVMPLIGWS) traverse the membrane as a helical segment. The Extracellular segment spans residues 197–220 (AYVPEGNLTACSIDYMTRMWNPRS). Residues 221–248 (YLITYSLFVYYTPLFLICYSYWFIIAAV) traverse the membrane as a helical segment. Topologically, residues 249 to 283 (AAHEKAMREQAKKMNVKSLRSSEDCDKSAEGKLAK) are cytoplasmic. Residues 284–307 (VALTTISLWFMAWTPYLVICYFGL) traverse the membrane as a helical segment. At 308–314 (FKIDGLT) the chain is on the extracellular side. Residues 315-339 (PLTTIWGATFAKTSAVYNPIVYGIS) traverse the membrane as a helical segment. N6-(retinylidene)lysine is present on lysine 326. The Cytoplasmic segment spans residues 340-381 (HPKYRIVLKEKCPMCVFGNTDEPKPDAPASDTETTSEADSKA). The disordered stretch occupies residues 359–381 (TDEPKPDAPASDTETTSEADSKA). A compositionally biased stretch (polar residues) spans 370 to 381 (DTETTSEADSKA).

It belongs to the G-protein coupled receptor 1 family. Opsin subfamily. Phosphorylated on some or all of the serine and threonine residues present in the C-terminal region. Predominant opsin expressed in the dorsal ocelli.

Its subcellular location is the membrane. Visual pigments are the light-absorbing molecules that mediate vision. They consist of an apoprotein, opsin, covalently linked to cis-retinal. This is Opsin Rh2 (Rh2) from Drosophila melanogaster (Fruit fly).